The sequence spans 393 residues: S-adenosylmethionine synthase 1 (393 aa).

Glu9 provides a ligand contact to Mg(2+). Position 15 (His15) interacts with ATP. Glu43 contributes to the K(+) binding site. Positions 56 and 99 each coordinate L-methionine. Residue Cys114 is modified to S-nitrosocysteine. ATP contacts are provided by residues 167–169 (DGK), 235–238 (SGRF), Asp246, 252–253 (RK), Ala269, Lys273, and Lys277. L-methionine is bound at residue Asp246. An L-methionine-binding site is contributed by Lys277.

It belongs to the AdoMet synthase family. As to quaternary structure, homotetramer. Interacts with GRF3. The cofactor is Mn(2+). Mg(2+) serves as cofactor. It depends on Co(2+) as a cofactor. K(+) is required as a cofactor. In terms of processing, S-nitrosylated in the presence of NO. The inhibition of SAM1 activity by S-nitrosylation could contribute to the cross-talk between ethylene and NO signaling. In terms of tissue distribution, highly expressed in stems and roots.

The protein resides in the cytoplasm. The catalysed reaction is L-methionine + ATP + H2O = S-adenosyl-L-methionine + phosphate + diphosphate. It participates in amino-acid biosynthesis; S-adenosyl-L-methionine biosynthesis; S-adenosyl-L-methionine from L-methionine: step 1/1. With respect to regulation, reversibly inhibited by NO. Inhibited by 5,5'-dithiobis-2-nitrobenzoic acid (DTNB) and N-ethylmaleimide (NEM) (in vitro). Functionally, catalyzes the formation of S-adenosylmethionine from methionine and ATP. The reaction comprises two steps that are both catalyzed by the same enzyme: formation of S-adenosylmethionine (AdoMet) and triphosphate, and subsequent hydrolysis of the triphosphate. The chain is S-adenosylmethionine synthase 1 (SAM1) from Arabidopsis thaliana (Mouse-ear cress).